The following is a 932-amino-acid chain: ER degradation-enhancing alpha-mannosidase-like protein 3 (932 aa).

An N-terminal signal peptide occupies residues 1-41 (MSEAGGRGCGSPVPQRARWRLVAATAAFCLVSATSVWTAGA). Residue asparagine 118 is glycosylated (N-linked (GlcNAc...) asparagine). Glutamate 146 (proton donor) is an active-site residue. An N-linked (GlcNAc...) asparagine glycan is attached at asparagine 195. Aspartate 293 is an active-site residue. Glutamate 387 (proton donor) is an active-site residue. Residue glutamate 405 is part of the active site. Threonine 491 contributes to the Ca(2+) binding site. N-linked (GlcNAc...) asparagine glycosylation is found at asparagine 504 and asparagine 511. The region spanning 674–779 (LSKHKETRGF…KEGSIILDAI (106 aa)) is the PA domain. Basic and acidic residues predominate over residues 790–799 (SDKAKDRDPE). The segment at 790–908 (SDKAKDRDPE…PNVSWGKKVQ (119 aa)) is disordered. N-linked (GlcNAc...) asparagine glycosylation is found at asparagine 810 and asparagine 814. Residues 812–825 (SQNQSGEQISSSSQ) show a composition bias toward low complexity. Positions 856–890 (ASISPSEQTSNPTENHETTNLNGECTDLDNQLQEQ) are enriched in polar residues. Asparagine 900 is a glycosylation site (N-linked (GlcNAc...) asparagine). The short motif at 929-932 (KDEL) is the Prevents secretion from ER element.

It belongs to the glycosyl hydrolase 47 family. The cofactor is Ca(2+).

It is found in the endoplasmic reticulum lumen. The catalysed reaction is N(4)-(alpha-D-Man-(1-&gt;2)-alpha-D-Man-(1-&gt;2)-alpha-D-Man-(1-&gt;3)-[alpha-D-Man-(1-&gt;2)-alpha-D-Man-(1-&gt;3)-[alpha-D-Man-(1-&gt;2)-alpha-D-Man-(1-&gt;6)]-alpha-D-Man-(1-&gt;6)]-beta-D-Man-(1-&gt;4)-beta-D-GlcNAc-(1-&gt;4)-beta-D-GlcNAc)-L-asparaginyl-[protein] (N-glucan mannose isomer 9A1,2,3B1,2,3) + 4 H2O = N(4)-(alpha-D-Man-(1-&gt;3)-[alpha-D-Man-(1-&gt;3)-[alpha-D-Man-(1-&gt;6)]-alpha-D-Man-(1-&gt;6)]-beta-D-Man-(1-&gt;4)-beta-D-GlcNAc-(1-&gt;4)-beta-D-GlcNAc)-L-asparaginyl-[protein] (N-glucan mannose isomer 5A1,2) + 4 beta-D-mannose. It catalyses the reaction N(4)-(alpha-D-Man-(1-&gt;2)-alpha-D-Man-(1-&gt;2)-alpha-D-Man-(1-&gt;3)-[alpha-D-Man-(1-&gt;3)-[alpha-D-Man-(1-&gt;2)-alpha-D-Man-(1-&gt;6)]-alpha-D-Man-(1-&gt;6)]-beta-D-Man-(1-&gt;4)-beta-D-GlcNAc-(1-&gt;4)-beta-D-GlcNAc)-L-asparaginyl-[protein] (N-glucan mannose isomer 8A1,2,3B1,3) + 3 H2O = N(4)-(alpha-D-Man-(1-&gt;3)-[alpha-D-Man-(1-&gt;3)-[alpha-D-Man-(1-&gt;6)]-alpha-D-Man-(1-&gt;6)]-beta-D-Man-(1-&gt;4)-beta-D-GlcNAc-(1-&gt;4)-beta-D-GlcNAc)-L-asparaginyl-[protein] (N-glucan mannose isomer 5A1,2) + 3 beta-D-mannose. The protein operates within protein modification; protein glycosylation. Its function is as follows. Involved in endoplasmic reticulum-associated degradation (ERAD). Accelerates the glycoprotein ERAD by proteasomes, by catalyzing mannose trimming from Man8GlcNAc2 to Man7GlcNAc2 in the N-glycans. May also participate in mannose trimming from all glycoproteins and not just misfolded ones targeted to ERAD. May have alpha 1,2-mannosidase activity. This chain is ER degradation-enhancing alpha-mannosidase-like protein 3 (EDEM3), found in Homo sapiens (Human).